Consider the following 301-residue polypeptide: Phosphoglycolate phosphatase 2 (301 aa).

Residue Asp-19 is the Nucleophile of the active site.

It belongs to the HAD-like hydrolase superfamily. CbbY/CbbZ/Gph/YieH family.

The catalysed reaction is 2-phosphoglycolate + H2O = glycolate + phosphate. Dephosphorylates 2-phosphoglycolate, but does not contribute to photorespiratory metabolism. The protein is Phosphoglycolate phosphatase 2 (PGLP2) of Arabidopsis thaliana (Mouse-ear cress).